The chain runs to 341 residues: Large ribosomal subunit protein uL29m (341 aa).

Positions 44-74 are disordered; sequence LARTRYTKPKPKPPRRSKVRAPTQTTHHDTD. Basic residues predominate over residues 48–62; sequence RYTKPKPKPPRRSKV.

Belongs to the universal ribosomal protein uL29 family. Component of the mitochondrial large ribosomal subunit. Mature mitochondrial ribosomes consist of a small (37S) and a large (54S) subunit. The 37S subunit contains at least 33 different proteins and 1 molecule of RNA (15S). The 54S subunit contains at least 45 different proteins and 1 molecule of RNA (21S).

Its subcellular location is the mitochondrion. The sequence is that of Large ribosomal subunit protein uL29m (MRPL4) from Eremothecium gossypii (strain ATCC 10895 / CBS 109.51 / FGSC 9923 / NRRL Y-1056) (Yeast).